Here is a 1938-residue protein sequence, read N- to C-terminus: Myosin-13 (1938 aa).

Residues 33 to 82 (DSKKACFVADNKEMYVKGMIQTRENDKVIVKTLDDRMLTLNNDQVFPMNP) form the Myosin N-terminal SH3-like domain. The Myosin motor domain maps to 86–782 (DKIEDMAMMT…LLGLLEEMRD (697 aa)). Lys-130 is subject to N6,N6,N6-trimethyllysine. ATP is bound at residue 179–186 (GESGAGKT). Actin-binding regions lie at residues 659–681 (LNKL…IPNE) and 761–775 (RFGN…GLLG). One can recognise an IQ domain in the interval 785 to 814 (LVTLMTSTQAVCRGYLMRVEFKKMMERRDS). The stretch at 843 to 1938 (LLKSAEAEKE…RDVGSQKMEE (1096 aa)) forms a coiled coil. A disordered region spans residues 1917 to 1938 (AESQVNKLRAKSRDVGSQKMEE). The segment covering 1927–1938 (KSRDVGSQKMEE) has biased composition (basic and acidic residues).

It belongs to the TRAFAC class myosin-kinesin ATPase superfamily. Myosin family. Muscle myosin is a hexameric protein that consists of 2 heavy chain subunits (MHC), 2 alkali light chain subunits (MLC) and 2 regulatory light chain subunits (MLC-2). Specifically expressed in extraocular and laryngeal muscles.

The protein resides in the cytoplasm. It is found in the myofibril. Fast twitching myosin mediating the high-velocity and low-tension contractions of specific striated muscles. This is Myosin-13 (MYH13) from Homo sapiens (Human).